Here is a 360-residue protein sequence, read N- to C-terminus: Protein Wnt-2 (360 aa).

The N-terminal stretch at 1-25 (MNAPLGGIWLWLPLLLTWLSPEVSS) is a signal peptide. 11 disulfide bridges follow: cysteine 76/cysteine 87, cysteine 127/cysteine 135, cysteine 137/cysteine 157, cysteine 206/cysteine 220, cysteine 208/cysteine 215, cysteine 278/cysteine 309, cysteine 294/cysteine 304, cysteine 308/cysteine 348, cysteine 324/cysteine 339, cysteine 326/cysteine 336, and cysteine 331/cysteine 332. Serine 212 carries the O-palmitoleoyl serine; by PORCN lipid modification. Residue asparagine 295 is glycosylated (N-linked (GlcNAc...) asparagine).

It belongs to the Wnt family. Palmitoleoylation is required for efficient binding to frizzled receptors. Depalmitoleoylation leads to Wnt signaling pathway inhibition.

It localises to the secreted. The protein resides in the extracellular space. Its subcellular location is the extracellular matrix. Functionally, ligand for members of the frizzled family of seven transmembrane receptors. Probable developmental protein. May be a signaling molecule which affects the development of discrete regions of tissues. Is likely to signal over only few cell diameters. This chain is Protein Wnt-2 (WNT2), found in Carollia perspicillata (Seba's short-tailed bat).